The primary structure comprises 197 residues: Holliday junction branch migration complex subunit RuvA (197 aa).

Positions 1-63 are domain I; sequence MFEYLNGKLV…EDAHSLYGFV (63 aa). Residues 64 to 142 are domain II; sequence NESEKALFLR…ATGAVGISLL (79 aa). The tract at residues 142–146 is flexible linker; the sequence is LDAAP. Positions 147 to 197 are domain III; sequence ASNLALEEAIEALQALGYKATELKKIEKKLAQEAGLTSEEYIKSALKLMMK.

The protein belongs to the RuvA family. Homotetramer. Forms an RuvA(8)-RuvB(12)-Holliday junction (HJ) complex. HJ DNA is sandwiched between 2 RuvA tetramers; dsDNA enters through RuvA and exits via RuvB. An RuvB hexamer assembles on each DNA strand where it exits the tetramer. Each RuvB hexamer is contacted by two RuvA subunits (via domain III) on 2 adjacent RuvB subunits; this complex drives branch migration. In the full resolvosome a probable DNA-RuvA(4)-RuvB(12)-RuvC(2) complex forms which resolves the HJ.

Its subcellular location is the cytoplasm. The RuvA-RuvB-RuvC complex processes Holliday junction (HJ) DNA during genetic recombination and DNA repair, while the RuvA-RuvB complex plays an important role in the rescue of blocked DNA replication forks via replication fork reversal (RFR). RuvA specifically binds to HJ cruciform DNA, conferring on it an open structure. The RuvB hexamer acts as an ATP-dependent pump, pulling dsDNA into and through the RuvAB complex. HJ branch migration allows RuvC to scan DNA until it finds its consensus sequence, where it cleaves and resolves the cruciform DNA. This Lactococcus lactis subsp. cremoris (strain MG1363) protein is Holliday junction branch migration complex subunit RuvA.